We begin with the raw amino-acid sequence, 2587 residues long: Fap1 adhesin (2587 aa).

Positions 1–85 (MGKYKRAGET…ATVVSGNVFA (85 aa)) are cleaved as a signal peptide. Disordered stretches follow at residues 107–158 (SSEN…SESV), 173–212 (SISE…DSVR), 515–539 (DSIP…KSIS), and 568–2558 (ESIT…GENV). Positions 107 to 195 (SSENFDSEKA…IVLSESGAAS (89 aa)) are ser-rich region 1, SRR1. Composition is skewed to low complexity over residues 121 to 158 (SLSQ…SESV) and 173 to 191 (SISE…LSES). Residues 191-522 (SGAASGNKAT…NADSIPSDTT (332 aa)) form a sufficient to block adherence to beads region. A compositionally biased stretch (polar residues) spans 192–202 (GAASGNKATSK). A compositionally biased stretch (basic and acidic residues) spans 203–212 (GTEEKQDSVR). The interval 516–2561 (SIPSDTTSQS…PNTGENVSSS (2046 aa)) is ser-rich region 2, SRR2. Composition is skewed to low complexity over residues 519 to 539 (SDTT…KSIS) and 568 to 2545 (ESIT…VSES). The required for localization to cell wall, fimbriae formation and adherence to saliva-coated hydroxyapatite beads (SHA) but not secretion stretch occupies residues 2367–2587 (SESISESVSE…RKKRKSEDAE (221 aa)). An LPXTG sorting signal motif is present at residues 2551–2555 (LPNTG). A Pentaglycyl murein peptidoglycan amidated threonine modification is found at Thr-2554. Positions 2555–2587 (GENVSSSLGLVGLSGLLFGALLGRKKRKSEDAE) are cleaved as a propeptide — removed by sortase.

Belongs to the serine-rich repeat protein (SRRP) family. In terms of processing, glycosylated; occurs within the cytoplasm. It is probable that most of the Ser residues in SSR1 and SSR2 are O-GlcNAcylated. Sequential glycosylation by sugar transferases are able to generate complex sugar polymorphisms.

The protein localises to the cytoplasm. Its subcellular location is the secreted. The protein resides in the cell wall. It localises to the fimbrium. In terms of biological role, the major structural element of fimbriae. Required for adherence to saliva-coated hydroxyapatite beads (SHA), an in vitro tooth model. A Fap1-dependent increase in adherence is seen as the pH is reduced from pH 8 to pH 5. This Streptococcus parasanguinis protein is Fap1 adhesin (fap1).